We begin with the raw amino-acid sequence, 47 residues long: Large ribosomal subunit protein bL36A (47 aa).

Belongs to the bacterial ribosomal protein bL36 family.

This is Large ribosomal subunit protein bL36A from Yersinia enterocolitica serotype O:8 / biotype 1B (strain NCTC 13174 / 8081).